Here is a 438-residue protein sequence, read N- to C-terminus: Cysteine--tRNA ligase (438 aa).

A Zn(2+)-binding site is contributed by cysteine 28. The 'HIGH' region motif lies at 30-40; sequence PTVYNHLHLGN. Zn(2+) contacts are provided by cysteine 207, histidine 232, and glutamate 236. The 'KMSKS' region signature appears at 264-268; that stretch reads KMSKS. Lysine 267 contacts ATP.

This sequence belongs to the class-I aminoacyl-tRNA synthetase family. As to quaternary structure, monomer. It depends on Zn(2+) as a cofactor.

Its subcellular location is the cytoplasm. It catalyses the reaction tRNA(Cys) + L-cysteine + ATP = L-cysteinyl-tRNA(Cys) + AMP + diphosphate. The protein is Cysteine--tRNA ligase of Aster yellows witches'-broom phytoplasma (strain AYWB).